The sequence spans 427 residues: 3-phosphoshikimate 1-carboxyvinyltransferase (427 aa).

K23, S24, and R28 together coordinate 3-phosphoshikimate. K23 serves as a coordination point for phosphoenolpyruvate. Residues G97 and R125 each contribute to the phosphoenolpyruvate site. Residues S170, S171, Q172, S198, D314, N337, and K341 each contribute to the 3-phosphoshikimate site. A phosphoenolpyruvate-binding site is contributed by Q172. The Proton acceptor role is filled by D314. R345, R387, and K412 together coordinate phosphoenolpyruvate.

The protein belongs to the EPSP synthase family. As to quaternary structure, monomer.

Its subcellular location is the cytoplasm. The enzyme catalyses 3-phosphoshikimate + phosphoenolpyruvate = 5-O-(1-carboxyvinyl)-3-phosphoshikimate + phosphate. Its pathway is metabolic intermediate biosynthesis; chorismate biosynthesis; chorismate from D-erythrose 4-phosphate and phosphoenolpyruvate: step 6/7. Catalyzes the transfer of the enolpyruvyl moiety of phosphoenolpyruvate (PEP) to the 5-hydroxyl of shikimate-3-phosphate (S3P) to produce enolpyruvyl shikimate-3-phosphate and inorganic phosphate. This Buchnera aphidicola subsp. Acyrthosiphon pisum (strain Tuc7) protein is 3-phosphoshikimate 1-carboxyvinyltransferase.